Reading from the N-terminus, the 371-residue chain is Ferredoxin--NADP reductase, apicoplast (371 aa).

The N-terminal 18 residues, 1–18 (MKIRFVFILSVLISGVCC), are a transit peptide targeting the apicoplast. FAD-binding positions include Lys-68, 155–159 (ARLYS), 172–179 (AIKIHKYE), 192–194 (YCS), and Thr-235. Positions 68–218 (KNPLKCKIVD…TGAHGYFNLP (151 aa)) constitute an FAD-binding FR-type domain. An NADP(+)-binding site is contributed by Lys-174. NADP(+) contacts are provided by residues 272-273 (VY), Ser-302, 313-315 (YVQ), and 341-343 (HKS). The FAD site is built by Lys-342 and Tyr-371.

It belongs to the ferredoxin--NADP reductase type 1 family. In terms of assembly, monomer. Homodimer; disulfide linked. NADP binding accelerates formation of an inactive, disulfide-linked homodimer when the protein is exposed to air for 24 hours or more (in vitro); the physiological relevance of this is uncertain. It depends on FAD as a cofactor.

The protein resides in the plastid. The protein localises to the apicoplast. It catalyses the reaction 2 reduced [2Fe-2S]-[ferredoxin] + NADP(+) + H(+) = 2 oxidized [2Fe-2S]-[ferredoxin] + NADPH. Functionally, may play a role in the terminal step of the DOXP/MEP pathway for isoprenoid precursor biosynthesis. This Plasmodium falciparum (isolate 3D7) protein is Ferredoxin--NADP reductase, apicoplast.